A 127-amino-acid polypeptide reads, in one-letter code: Large ribosomal subunit protein bL12 (127 aa).

This sequence belongs to the bacterial ribosomal protein bL12 family. Homodimer. Part of the ribosomal stalk of the 50S ribosomal subunit. Forms a multimeric L10(L12)X complex, where L10 forms an elongated spine to which 2 to 4 L12 dimers bind in a sequential fashion. Binds GTP-bound translation factors.

Forms part of the ribosomal stalk which helps the ribosome interact with GTP-bound translation factors. Is thus essential for accurate translation. The polypeptide is Large ribosomal subunit protein bL12 (Clavibacter michiganensis subsp. michiganensis (strain NCPPB 382)).